The following is a 201-amino-acid chain: Cold shock domain-containing protein 4 (201 aa).

Serine 2 carries the N-acetylserine modification. The region spanning 14–81 (RRKGTVKWFD…RPKAIEVSGP (68 aa)) is the CSD domain. A disordered region spans residues 66–109 (EVDNSGRPKAIEVSGPDGAPVQGNSGGGGSSGGRGGFGGGGGRG). Gly residues predominate over residues 89–109 (NSGGGGSSGGRGGFGGGGGRG). 2 CCHC-type zinc fingers span residues 136-153 (NSCFKCGEPGHMARECSQ) and 180-197 (LSCYSCGESGHFARDCTS).

Belongs to the cold shock protein (CSP) family. Mostly expressed in shoot apices and siliques, and, to a lower extent, in roots, cotyledons, stems, shoots, leaves, floral buds and flowers. Present in shoot apical meristems and siliques (at protein level). Very low levels are observed in cv. Landsberg erecta compared to cv. Columbia.

It localises to the cytoplasm. Its subcellular location is the nucleus. The protein localises to the nucleolus. In terms of biological role, chaperone that binds to and unwinds RNA and both single-stranded DNA and double-stranded DNA (ssDNA and dsDNA DNA). Regulates the flowering transition and flower and seed development, particularly at late stages of embryo development, through regulation of gene expression (including MEA, FIS2, AP1, CAL, AG and SHP2). This chain is Cold shock domain-containing protein 4 (CSP4), found in Arabidopsis thaliana (Mouse-ear cress).